Consider the following 764-residue polypeptide: E3 ubiquitin-protein ligase CBL-B-B (764 aa).

A compositionally biased stretch (low complexity) spans 1-19 (MASSSSSSSNSSTSSSALS). The segment at 1–27 (MASSSSSSSNSSTSSSALSGRLPGARS) is disordered. The interval 48–180 (PPKQAAADRR…KAIFPSGQFQ (133 aa)) is 4H. The region spanning 48–356 (PPKQAAADRR…GRSYNPDLTD (309 aa)) is the Cbl-PTB domain. Residues 181–253 (GDTFRITKAD…FEFDIFARLF (73 aa)) are EF-hand-like. Residues D234, T236, N238, Y240, and E245 each coordinate Ca(2+). Residues 254-356 (QPWSSILRNW…GRSYNPDLTD (103 aa)) are SH2-like. R299 lines the 4-O-phospho-L-tyrosine pocket. Residues 357–385 (LCEPTPHDHIKVTQEQYELYCEMGSTFQL) are linker. Residues 386–425 (CKICAENDKDVKIEPCGHLMCTSCLTSWQESDGQGCPFCR) form an RING-type zinc finger. Disordered regions lie at residues 482–583 (MNER…SRTC) and 707–726 (KVRNSAEEDDSEYKIPSSHP). Residues 485–498 (RQNSPVTSPGSSPL) are compositionally biased toward polar residues. A compositionally biased stretch (pro residues) spans 556–578 (LPAPPPPLREPPPPPERPPPIPP).

As to quaternary structure, interacts with several SH3 domain-containing proteins and with poly-ubiquitinated proteins.

It is found in the cytoplasm. It catalyses the reaction S-ubiquitinyl-[E2 ubiquitin-conjugating enzyme]-L-cysteine + [acceptor protein]-L-lysine = [E2 ubiquitin-conjugating enzyme]-L-cysteine + N(6)-ubiquitinyl-[acceptor protein]-L-lysine.. It functions in the pathway protein modification; protein ubiquitination. In terms of biological role, E3 ubiquitin-protein ligase which accepts ubiquitin from specific E2 ubiquitin-conjugating enzymes, and transfers it to substrates, generally promoting their degradation by the proteasome. The protein is E3 ubiquitin-protein ligase CBL-B-B (cblb-b) of Xenopus laevis (African clawed frog).